The sequence spans 230 residues: Large ribosomal subunit protein uL1 (230 aa).

This sequence belongs to the universal ribosomal protein uL1 family. Part of the 50S ribosomal subunit.

In terms of biological role, binds directly to 23S rRNA. The L1 stalk is quite mobile in the ribosome, and is involved in E site tRNA release. Functionally, protein L1 is also a translational repressor protein, it controls the translation of the L11 operon by binding to its mRNA. This is Large ribosomal subunit protein uL1 from Bacillus cereus (strain B4264).